The chain runs to 318 residues: MMHRNQTVVTEFFFTGLTSSFHLQIVLFLTFLCVYLATLLGNLGMIILIHQDTRLHIPMYFFLSHLSFVDACSSSVISPKMLSDIFVDKKVISFLGCAIQFCLFSQFVVTECFLLASMAYDRYVAICKPLLYTLIMSQRVCVQLVIGPYSIGLISTVVHTTSAFILPYCGPNLINHFFCDLLPVLSLACADTQMNKHLLFIMAGILGVFSGIIILVSYVYIAITILKINSADGRRKAFSTCSSHLTAVSILYGTLFFIYVRPSSSFSLDINKVVSLFYTAVIPMLNPFIYSLRNKEVKDALIRTFEKKFCYSLQDKIL.

Residues 1-25 (MMHRNQTVVTEFFFTGLTSSFHLQI) are Extracellular-facing. Asn-5 carries an N-linked (GlcNAc...) asparagine glycan. Residues 26-46 (VLFLTFLCVYLATLLGNLGMI) form a helical membrane-spanning segment. The Cytoplasmic segment spans residues 47–54 (ILIHQDTR). The helical transmembrane segment at 55–75 (LHIPMYFFLSHLSFVDACSSS) threads the bilayer. Over 76–99 (VISPKMLSDIFVDKKVISFLGCAI) the chain is Extracellular. Cys-97 and Cys-189 are oxidised to a cystine. A helical transmembrane segment spans residues 100–120 (QFCLFSQFVVTECFLLASMAY). The Cytoplasmic portion of the chain corresponds to 121–133 (DRYVAICKPLLYT). Residues 134–154 (LIMSQRVCVQLVIGPYSIGLI) traverse the membrane as a helical segment. Topologically, residues 155–196 (STVVHTTSAFILPYCGPNLINHFFCDLLPVLSLACADTQMNK) are extracellular. The helical transmembrane segment at 197 to 217 (HLLFIMAGILGVFSGIIILVS) threads the bilayer. The Cytoplasmic portion of the chain corresponds to 218–237 (YVYIAITILKINSADGRRKA). A helical membrane pass occupies residues 238 to 258 (FSTCSSHLTAVSILYGTLFFI). Residues 259–271 (YVRPSSSFSLDIN) lie on the Extracellular side of the membrane. A helical transmembrane segment spans residues 272 to 292 (KVVSLFYTAVIPMLNPFIYSL). The Cytoplasmic portion of the chain corresponds to 293–318 (RNKEVKDALIRTFEKKFCYSLQDKIL).

Belongs to the G-protein coupled receptor 1 family.

The protein localises to the cell membrane. In terms of biological role, potential odorant receptor. In Mus musculus (Mouse), this protein is Olfactory receptor 5G25.